Consider the following 287-residue polypeptide: mRNA-capping enzyme small subunit (287 aa).

In terms of assembly, heterodimer of a large and a small subunit.

The protein localises to the virion. The enzyme catalyses a 5'-end (5'-triphosphoguanosine)-ribonucleoside in mRNA + S-adenosyl-L-methionine = a 5'-end (N(7)-methyl 5'-triphosphoguanosine)-ribonucleoside in mRNA + S-adenosyl-L-homocysteine. Its function is as follows. Catalyzes the last reaction in the mRNA cap formation pathway. The chain is mRNA-capping enzyme small subunit from Erythrocebus patas (Red guenon).